Reading from the N-terminus, the 235-residue chain is Octanoyltransferase (235 aa).

Residues 44–231 enclose the BPL/LPL catalytic domain; it reads DTTADELWLV…HQVGLPNENN (188 aa). Residues 83–90, 150–152, and 163–165 each bind substrate; these read RGGQVTYH, SLG, and GLA. C181 serves as the catalytic Acyl-thioester intermediate.

Belongs to the LipB family.

The protein resides in the cytoplasm. It catalyses the reaction octanoyl-[ACP] + L-lysyl-[protein] = N(6)-octanoyl-L-lysyl-[protein] + holo-[ACP] + H(+). Its pathway is protein modification; protein lipoylation via endogenous pathway; protein N(6)-(lipoyl)lysine from octanoyl-[acyl-carrier-protein]: step 1/2. Functionally, catalyzes the transfer of endogenously produced octanoic acid from octanoyl-acyl-carrier-protein onto the lipoyl domains of lipoate-dependent enzymes. Lipoyl-ACP can also act as a substrate although octanoyl-ACP is likely to be the physiological substrate. The polypeptide is Octanoyltransferase (Colwellia psychrerythraea (strain 34H / ATCC BAA-681) (Vibrio psychroerythus)).